Reading from the N-terminus, the 408-residue chain is tRNA(Met) cytidine acetate ligase (408 aa).

Residues 7 to 20 (IVEY…HKYH), Gly102, Asn170, and 195 to 196 (RI) each bind ATP.

This sequence belongs to the TmcAL family.

It is found in the cytoplasm. It carries out the reaction cytidine(34) in elongator tRNA(Met) + acetate + ATP = N(4)-acetylcytidine(34) in elongator tRNA(Met) + AMP + diphosphate. Functionally, catalyzes the formation of N(4)-acetylcytidine (ac(4)C) at the wobble position of elongator tRNA(Met), using acetate and ATP as substrates. First activates an acetate ion to form acetyladenylate (Ac-AMP) and then transfers the acetyl group to tRNA to form ac(4)C34. The polypeptide is tRNA(Met) cytidine acetate ligase (Clostridium kluyveri (strain NBRC 12016)).